The primary structure comprises 408 residues: Argininosuccinate synthase (408 aa).

Residues Ala-12–Ser-20 and Ala-39 contribute to the ATP site. Tyr-90 and Ser-95 together coordinate L-citrulline. Gly-120 contacts ATP. Residues Thr-122, Asn-126, and Asp-127 each contribute to the L-aspartate site. L-citrulline is bound at residue Asn-126. L-citrulline-binding residues include Arg-130, Ser-181, Ser-190, Glu-266, and Tyr-278.

It belongs to the argininosuccinate synthase family. Type 1 subfamily. Homotetramer.

Its subcellular location is the cytoplasm. The catalysed reaction is L-citrulline + L-aspartate + ATP = 2-(N(omega)-L-arginino)succinate + AMP + diphosphate + H(+). The protein operates within amino-acid biosynthesis; L-arginine biosynthesis; L-arginine from L-ornithine and carbamoyl phosphate: step 2/3. This Methylococcus capsulatus (strain ATCC 33009 / NCIMB 11132 / Bath) protein is Argininosuccinate synthase.